We begin with the raw amino-acid sequence, 56 residues long: Photosystem II reaction center protein K (56 aa).

A propeptide spanning residues 1–19 (MFNIFLDDAFIHSNNPFFG) is cleaved from the precursor. A helical transmembrane segment spans residues 35–55 (MPIIPVLSFLLAFVWQAAVSF).

It belongs to the PsbK family. PSII is composed of 1 copy each of membrane proteins PsbA, PsbB, PsbC, PsbD, PsbE, PsbF, PsbH, PsbI, PsbJ, PsbK, PsbL, PsbM, PsbT, PsbX, PsbY, PsbZ, Psb30/Ycf12, at least 3 peripheral proteins of the oxygen-evolving complex and a large number of cofactors. It forms dimeric complexes.

The protein localises to the plastid. It localises to the chloroplast thylakoid membrane. One of the components of the core complex of photosystem II (PSII). PSII is a light-driven water:plastoquinone oxidoreductase that uses light energy to abstract electrons from H(2)O, generating O(2) and a proton gradient subsequently used for ATP formation. It consists of a core antenna complex that captures photons, and an electron transfer chain that converts photonic excitation into a charge separation. The chain is Photosystem II reaction center protein K from Pinus thunbergii (Japanese black pine).